Here is a 308-residue protein sequence, read N- to C-terminus: tRNA pseudouridine synthase B (308 aa).

Residue Asp46 is the Nucleophile of the active site.

This sequence belongs to the pseudouridine synthase TruB family. Type 1 subfamily.

The enzyme catalyses uridine(55) in tRNA = pseudouridine(55) in tRNA. Responsible for synthesis of pseudouridine from uracil-55 in the psi GC loop of transfer RNAs. This is tRNA pseudouridine synthase B from Marinomonas sp. (strain MWYL1).